The chain runs to 201 residues: B-cell CLL/lymphoma 7 protein family member B-B (201 aa).

The interval 104-201 (QSNTKVDSSS…VCTEHNSTVS (98 aa)) is disordered.

This sequence belongs to the BCL7 family.

This chain is B-cell CLL/lymphoma 7 protein family member B-B, found in Danio rerio (Zebrafish).